Reading from the N-terminus, the 407-residue chain is Arylacetamide deacetylase-like 3 (407 aa).

An Involved in the stabilization of the negatively charged intermediate by the formation of the oxyanion hole motif is present at residues 119–121; it reads HGG. Residues serine 193, aspartate 347, and histidine 377 contribute to the active site.

Belongs to the 'GDXG' lipolytic enzyme family.

This chain is Arylacetamide deacetylase-like 3 (AADACL3), found in Homo sapiens (Human).